Here is a 156-residue protein sequence, read N- to C-terminus: MPRRRVAAKREILDDPKYGSQILAKFMNHVMESGKKAVAERIVYGALDTVKSRKNSDPLEIFEKALDAIAPLVEVKSRRVGGATYQVPVEVRPSRRNALAMRWLVDSARKRGEKSMALRLAGELLDASEGKGAAVKKREDVHRMAEANKAFSHYRF.

The protein belongs to the universal ribosomal protein uS7 family. As to quaternary structure, part of the 30S ribosomal subunit. Contacts proteins S9 and S11.

One of the primary rRNA binding proteins, it binds directly to 16S rRNA where it nucleates assembly of the head domain of the 30S subunit. Is located at the subunit interface close to the decoding center, probably blocks exit of the E-site tRNA. The polypeptide is Small ribosomal subunit protein uS7 (Azotobacter vinelandii (strain DJ / ATCC BAA-1303)).